Reading from the N-terminus, the 742-residue chain is Collectin-12 (742 aa).

At 1–37 (MKDDFAEEEEVHSFGYKRFGIQEGTQCTKCKNNWALK) the chain is on the cytoplasmic side. Residues 38-58 (LSIILLYILCALLTITVAILG) traverse the membrane as a helical; Signal-anchor for type II membrane protein segment. Topologically, residues 59 to 742 (YKVVEKMDNV…DRERELAITL (684 aa)) are extracellular. Residue asparagine 67 is glycosylated (N-linked (GlcNAc...) asparagine). Positions 73–141 (ETSRQTYDDK…NKDTLEKLQA (69 aa)) form a coiled coil. 2 N-linked (GlcNAc...) asparagine glycosylation sites follow: asparagine 159 and asparagine 168. The stretch at 215 to 254 (QQRNLITNLQRSVDDTSQAIQRIKNDFQNLQQVFLQAKKD) forms a coiled coil. Asparagine 271 carries an N-linked (GlcNAc...) asparagine glycan. Residues 296–328 (QMDNITTASQANEQNLKDLQDVHRDAENRTAAK) adopt a coiled-coil conformation. Residues 439-591 (TILQGPPGPR…PPGPSGAAVP (153 aa)) are disordered. 2 Collagen-like domains span residues 443–502 (GPPG…KGSK) and 527–586 (GPPG…PGPS). Positions 501–514 (SKGLQGSKGSRGSP) are enriched in low complexity. Pro residues predominate over residues 516 to 532 (KPGPQGPSGDPGPPGPP). The span at 534–556 (KDGLPGPQGPPGFQGLQGTVGEP) shows a compositional bias: low complexity. 3 disulfides stabilise this stretch: cysteine 607–cysteine 618, cysteine 635–cysteine 730, and cysteine 708–cysteine 722. The region spanning 614–731 (FTDKCYYFST…CEDMNHFICE (118 aa)) is the C-type lectin domain. 5 residues coordinate Ca(2+): phenylalanine 644, asparagine 646, glutamate 650, aspartate 670, and glutamate 674. Lysine 691, glutamine 694, and aspartate 696 together coordinate a carbohydrate. Ca(2+) is bound by residues glutamine 694, aspartate 696, asparagine 697, glutamate 706, aspartate 707, asparagine 718, aspartate 719, and glutamate 731. Glutamate 706 serves as a coordination point for a carbohydrate. 2 residues coordinate a carbohydrate: asparagine 718 and aspartate 719.

In terms of assembly, the extracellular domain forms a stable trimer. The extracellular domain interacts with fibrillar amyloid-beta peptide.

It localises to the membrane. Its function is as follows. Scavenger receptor that displays several functions associated with host defense. Promotes binding and phagocytosis of Gram-positive, Gram-negative bacteria and yeast. Mediates the recognition, internalization and degradation of oxidatively modified low density lipoprotein (oxLDL) by vascular endothelial cells. Binds to several carbohydrates including Gal-type ligands, D-galactose, L- and D-fucose, GalNAc, T and Tn antigens in a calcium-dependent manner and internalizes specifically GalNAc in nurse-like cells. Also binds to sialyl Lewis X or a trisaccharide and asialo-orosomucoid (ASOR). The polypeptide is Collectin-12 (COLEC12) (Bos taurus (Bovine)).